Reading from the N-terminus, the 200-residue chain is Ephrin-A2 (200 aa).

Residues 1–22 form the signal peptide; sequence MPRWEAAALLAAIVGVCVWSDD. Residues 28-161 enclose the Ephrin RBD domain; that stretch reads SDRYAVYWNR…KLKVYVRPTN (134 aa). A glycan (N-linked (GlcNAc...) asparagine) is linked at N36. 2 disulfide bridges follow: C61–C101 and C89–C150. N-linked (GlcNAc...) asparagine glycans are attached at residues N161 and N175. N175 carries the GPI-anchor amidated asparagine lipid modification. The propeptide at 176-200 is removed in mature form; it reads NSCCSLAVPRAVLVAAPVFWTLLGS.

Belongs to the ephrin family. In terms of assembly, binds to the receptor tyrosine kinases EPHA3, EPHA4 and EPHA5. Interacts with EPHA8; activates EPHA8. In terms of tissue distribution, expressed in a gradient across the tectum being more strongly expressed at the posterior pole.

The protein resides in the cell membrane. In terms of biological role, cell surface GPI-bound ligand for Eph receptors, a family of receptor tyrosine kinases which are crucial for migration, repulsion and adhesion during neuronal, vascular and epithelial development. Binds promiscuously Eph receptors residing on adjacent cells, leading to contact-dependent bidirectional signaling into neighboring cells. The signaling pathway downstream of the receptor is referred to as forward signaling while the signaling pathway downstream of the ephrin ligand is referred to as reverse signaling. With the EPHA2 receptor may play a role in bone remodeling through regulation of osteoclastogenesis and osteoblastogenesis. In Gallus gallus (Chicken), this protein is Ephrin-A2 (EFNA2).